The primary structure comprises 105 residues: Large ribosomal subunit protein bL21 (105 aa).

The protein belongs to the bacterial ribosomal protein bL21 family. In terms of assembly, part of the 50S ribosomal subunit. Contacts protein L20.

This protein binds to 23S rRNA in the presence of protein L20. The polypeptide is Large ribosomal subunit protein bL21 (Treponema pallidum (strain Nichols)).